Here is a 214-residue protein sequence, read N- to C-terminus: Orotate phosphoribosyltransferase (214 aa).

Lysine 26 is a 5-phospho-alpha-D-ribose 1-diphosphate binding site. Position 34-35 (34-35 (FF)) interacts with orotate. 5-phospho-alpha-D-ribose 1-diphosphate contacts are provided by residues 72-73 (YK), arginine 99, lysine 100, lysine 103, histidine 105, and 124-132 (DDVITAGTA). Orotate contacts are provided by threonine 128 and arginine 157.

It belongs to the purine/pyrimidine phosphoribosyltransferase family. PyrE subfamily. As to quaternary structure, homodimer. Mg(2+) serves as cofactor.

The enzyme catalyses orotidine 5'-phosphate + diphosphate = orotate + 5-phospho-alpha-D-ribose 1-diphosphate. It functions in the pathway pyrimidine metabolism; UMP biosynthesis via de novo pathway; UMP from orotate: step 1/2. Functionally, catalyzes the transfer of a ribosyl phosphate group from 5-phosphoribose 1-diphosphate to orotate, leading to the formation of orotidine monophosphate (OMP). This Pseudomonas fluorescens (strain SBW25) protein is Orotate phosphoribosyltransferase.